Reading from the N-terminus, the 96-residue chain is Protein YdfX (96 aa).

In Escherichia coli (strain K12), this protein is Protein YdfX (ydfX).